Consider the following 160-residue polypeptide: Cyclic pyranopterin monophosphate synthase (160 aa).

Substrate-binding positions include 77-79 (LCH) and 115-116 (ME). D130 is a catalytic residue.

It belongs to the MoaC family. In terms of assembly, homohexamer; trimer of dimers.

The catalysed reaction is (8S)-3',8-cyclo-7,8-dihydroguanosine 5'-triphosphate = cyclic pyranopterin phosphate + diphosphate. It functions in the pathway cofactor biosynthesis; molybdopterin biosynthesis. Functionally, catalyzes the conversion of (8S)-3',8-cyclo-7,8-dihydroguanosine 5'-triphosphate to cyclic pyranopterin monophosphate (cPMP). In Parvibaculum lavamentivorans (strain DS-1 / DSM 13023 / NCIMB 13966), this protein is Cyclic pyranopterin monophosphate synthase.